Here is a 157-residue protein sequence, read N- to C-terminus: Protein-export protein SecB (157 aa).

Belongs to the SecB family. In terms of assembly, homotetramer, a dimer of dimers. One homotetramer interacts with 1 SecA dimer.

It is found in the cytoplasm. In terms of biological role, one of the proteins required for the normal export of preproteins out of the cell cytoplasm. It is a molecular chaperone that binds to a subset of precursor proteins, maintaining them in a translocation-competent state. It also specifically binds to its receptor SecA. This chain is Protein-export protein SecB, found in Rhodopseudomonas palustris (strain TIE-1).